The chain runs to 92 residues: Small ribosomal subunit protein uS19c (92 aa).

It belongs to the universal ribosomal protein uS19 family.

Its subcellular location is the plastid. It localises to the chloroplast. Its function is as follows. Protein S19 forms a complex with S13 that binds strongly to the 16S ribosomal RNA. The sequence is that of Small ribosomal subunit protein uS19c from Guizotia abyssinica (Niger).